A 661-amino-acid polypeptide reads, in one-letter code: UvrABC system protein C (661 aa).

Residues Ala25 to Val104 enclose the GIY-YIG domain. The UVR domain maps to Asp214 to Leu249. The segment covering Phe636–Leu652 has biased composition (basic and acidic residues). The interval Phe636–Ala661 is disordered.

Belongs to the UvrC family. In terms of assembly, interacts with UvrB in an incision complex.

The protein localises to the cytoplasm. In terms of biological role, the UvrABC repair system catalyzes the recognition and processing of DNA lesions. UvrC both incises the 5' and 3' sides of the lesion. The N-terminal half is responsible for the 3' incision and the C-terminal half is responsible for the 5' incision. The protein is UvrABC system protein C of Synechococcus sp. (strain CC9605).